A 573-amino-acid polypeptide reads, in one-letter code: Leucine aminopeptidase, chloroplastic (573 aa).

The N-terminal 53 residues, 1-53 (MATLRVSSLLASSPSSLHCNPSVFTKCQSSPRWAFSFSVTPLCSRRSKRIVHC), are a transit peptide targeting the chloroplast. The Mn(2+) site is built by K342 and D347. K354 is an active-site residue. Residues D367, D427, and E429 each contribute to the Mn(2+) site. The active site involves R431.

Belongs to the peptidase M17 family. Homohexamer (dimer of homotrimers). It depends on Mn(2+) as a cofactor. In tubers and floral buds of untreated plants. After abscisic acid (ABA) treatment or mechanical wounding is mostly accumulated in leaves, to a lesser extent in stems, but not in roots.

The protein resides in the plastid. It is found in the chloroplast. The enzyme catalyses Release of an N-terminal amino acid, Xaa-|-Yaa-, in which Xaa is preferably Leu, but may be other amino acids including Pro although not Arg or Lys, and Yaa may be Pro. Amino acid amides and methyl esters are also readily hydrolyzed, but rates on arylamides are exceedingly low.. It carries out the reaction Release of N-terminal proline from a peptide.. Functionally, presumably involved in the processing and regular turnover of intracellular proteins. This is Leucine aminopeptidase, chloroplastic (LAP) from Solanum tuberosum (Potato).